We begin with the raw amino-acid sequence, 134 residues long: Protein NrdI (134 aa).

This sequence belongs to the NrdI family.

Functionally, probably involved in ribonucleotide reductase function. In Chromohalobacter salexigens (strain ATCC BAA-138 / DSM 3043 / CIP 106854 / NCIMB 13768 / 1H11), this protein is Protein NrdI.